The following is a 183-amino-acid chain: Peptidyl-prolyl cis-trans isomerase H (183 aa).

The 164-residue stretch at 19 to 182 (FFDVALGGEP…QDVVIIQCGE (164 aa)) folds into the PPIase cyclophilin-type domain.

Belongs to the cyclophilin-type PPIase family. PPIase H subfamily.

The protein localises to the nucleus. It carries out the reaction [protein]-peptidylproline (omega=180) = [protein]-peptidylproline (omega=0). PPIases accelerate the folding of proteins. It catalyzes the cis-trans isomerization of proline imidic peptide bonds in oligopeptides. The polypeptide is Peptidyl-prolyl cis-trans isomerase H (cyp3) (Emericella nidulans (strain FGSC A4 / ATCC 38163 / CBS 112.46 / NRRL 194 / M139) (Aspergillus nidulans)).